We begin with the raw amino-acid sequence, 396 residues long: 1-deoxy-D-xylulose 5-phosphate reductoisomerase (396 aa).

NADPH is bound by residues T10, G11, S12, I13, and N123. K124 lines the 1-deoxy-D-xylulose 5-phosphate pocket. E125 contributes to the NADPH binding site. D149 is a binding site for Mn(2+). 1-deoxy-D-xylulose 5-phosphate contacts are provided by S150, E151, S185, and H208. E151 lines the Mn(2+) pocket. G214 is an NADPH binding site. 4 residues coordinate 1-deoxy-D-xylulose 5-phosphate: S221, N226, K227, and E230. E230 provides a ligand contact to Mn(2+).

This sequence belongs to the DXR family. Mg(2+) is required as a cofactor. Mn(2+) serves as cofactor.

The enzyme catalyses 2-C-methyl-D-erythritol 4-phosphate + NADP(+) = 1-deoxy-D-xylulose 5-phosphate + NADPH + H(+). It functions in the pathway isoprenoid biosynthesis; isopentenyl diphosphate biosynthesis via DXP pathway; isopentenyl diphosphate from 1-deoxy-D-xylulose 5-phosphate: step 1/6. Functionally, catalyzes the NADPH-dependent rearrangement and reduction of 1-deoxy-D-xylulose-5-phosphate (DXP) to 2-C-methyl-D-erythritol 4-phosphate (MEP). The protein is 1-deoxy-D-xylulose 5-phosphate reductoisomerase of Shewanella baltica (strain OS155 / ATCC BAA-1091).